The chain runs to 306 residues: UDP-3-O-acyl-N-acetylglucosamine deacetylase (306 aa).

3 residues coordinate Zn(2+): histidine 79, histidine 238, and aspartate 242. The active-site Proton donor is histidine 265.

This sequence belongs to the LpxC family. Zn(2+) is required as a cofactor.

It carries out the reaction a UDP-3-O-[(3R)-3-hydroxyacyl]-N-acetyl-alpha-D-glucosamine + H2O = a UDP-3-O-[(3R)-3-hydroxyacyl]-alpha-D-glucosamine + acetate. The protein operates within glycolipid biosynthesis; lipid IV(A) biosynthesis; lipid IV(A) from (3R)-3-hydroxytetradecanoyl-[acyl-carrier-protein] and UDP-N-acetyl-alpha-D-glucosamine: step 2/6. Functionally, catalyzes the hydrolysis of UDP-3-O-myristoyl-N-acetylglucosamine to form UDP-3-O-myristoylglucosamine and acetate, the committed step in lipid A biosynthesis. The chain is UDP-3-O-acyl-N-acetylglucosamine deacetylase from Shewanella denitrificans (strain OS217 / ATCC BAA-1090 / DSM 15013).